A 273-amino-acid chain; its full sequence is Protein BRANCHLESS TRICHOME (273 aa).

The span at 1–12 (MKDMKMQSSPET) shows a compositional bias: polar residues. Residues 1 to 30 (MKDMKMQSSPETMMTRIPTPDPHSTGVRED) form a disordered region. Residues 69–199 (IKVFMESELG…GERERNRMMK (131 aa)) are a coiled coil.

As to quaternary structure, interacts with STI.

Functionally, acts as a key regulator of trichome branching. Could participate with STI in the same pathway. Also plays a role in integrating endoreplication levels with cell shape. This is Protein BRANCHLESS TRICHOME (BLT) from Arabidopsis thaliana (Mouse-ear cress).